The primary structure comprises 707 residues: Anti-sigma-I factor RsgI9 (707 aa).

Residues 1-149 are Cytoplasmic-facing; the sequence is MKITGVIVRI…NFSRISNIKN (149 aa). Residues 3–50 enclose the RsgI N-terminal anti-sigma domain; the sequence is ITGVIVRIHKDRAIIRTDDNRLLAVKRHNDMMVGQIVSFDANEVHKVE. The chain crosses the membrane as a helical span at residues 150-172; sequence FSRIASIAAAFVLIFLFGRNVML. Over 173 to 707 the chain is Extracellular; that stretch reads NNSSDSEYAY…DSEEKKEYIQ (535 aa). A coiled-coil region spans residues 256 to 283; that stretch reads NDKNKKTRDKREEKIDELKETIEQGIEA. The interval 345 to 392 is disordered; that stretch reads EDNTELAPTPTPVPPETPEPTPTPTASEATPSNSPVESKSPEAVPELG. Pro residues predominate over residues 353–367; the sequence is TPTPVPPETPEPTPT. The span at 368-379 shows a compositional bias: low complexity; sequence PTASEATPSNSP.

It localises to the cell membrane. The chain is Anti-sigma-I factor RsgI9 from Acetivibrio thermocellus (strain ATCC 27405 / DSM 1237 / JCM 9322 / NBRC 103400 / NCIMB 10682 / NRRL B-4536 / VPI 7372) (Clostridium thermocellum).